We begin with the raw amino-acid sequence, 347 residues long: Zinc finger protein CONSTANS-LIKE 2 (347 aa).

8 residues coordinate Zn(2+): Cys-16, Cys-19, Cys-39, His-44, Cys-59, Cys-62, Cys-82, and His-87. The B box-type 1; atypical zinc finger occupies 16 to 58 (CDTCRSAACTVYCEADSAYLCTTCDARVHAANRVASRHERVRV). Residues 59–101 (CQSCESAPAAFLCKADAASLCTACDAEIHSANPLARRHQRVPI) form a B box-type 2; atypical zinc finger. In terms of domain architecture, CCT spans 278–320 (REARVLRYREKKKTRKFDKTIRYASRKAYAEIRPRIKGRFAKR).

The protein belongs to the CONSTANS family. Highly expressed in leaves. Expressed at lower levels in stems, flowers and siliques. Not detected in roots.

Its subcellular location is the nucleus. Functionally, putative transcription factor. Does not affect flowering time. This Arabidopsis thaliana (Mouse-ear cress) protein is Zinc finger protein CONSTANS-LIKE 2 (COL2).